A 254-amino-acid polypeptide reads, in one-letter code: Sulfoacetaldehyde reductase (254 aa).

Residue 8-32 participates in NADP(+) binding; it reads FITGATSGFGEAAAQVFADAGWSLV. Serine 141 lines the substrate pocket. Residue tyrosine 154 is the Proton acceptor of the active site.

Belongs to the short-chain dehydrogenases/reductases (SDR) family. Homodimer and heterotetramer.

It carries out the reaction 2-hydroxyethane-1-sulfonate + NADP(+) = sulfoacetaldehyde + NADPH + H(+). The protein operates within organosulfur degradation. Catalyzes the formation of isethionate from 2-sulfoacetaldehyde in the deaminative pathway of taurine. The enzyme is specific for NADPH; NADH is not a substrate. The chain is Sulfoacetaldehyde reductase (isfD) from Klebsiella oxytoca.